The following is a 168-amino-acid chain: Putative insulin-like growth factor 2 antisense gene protein (168 aa).

2 disordered regions span residues 1–91 and 108–168; these read MSKR…ERSN and PLRR…RPGK. Composition is skewed to basic residues over residues 59 to 70 and 159 to 168; these read AQRRRGSARRGA and RWRQPGRPGK.

The sequence is that of Putative insulin-like growth factor 2 antisense gene protein (IGF2-AS) from Homo sapiens (Human).